We begin with the raw amino-acid sequence, 162 residues long: Cytochrome c-type biogenesis protein CcmE (162 aa).

Residues 1-8 (MNPVRKKR) lie on the Cytoplasmic side of the membrane. Residues 9–29 (LIIVLAIVAGVGAAVGLALSA) traverse the membrane as a helical; Signal-anchor for type II membrane protein segment. The Periplasmic portion of the chain corresponds to 30 to 162 (LQQNINLFYT…GETSYNQEGK (133 aa)). Histidine 124 and tyrosine 128 together coordinate heme. Residues 139–148 (DSGQLKHYEN) show a composition bias toward basic and acidic residues. A disordered region spans residues 139–162 (DSGQLKHYENGKAAGETSYNQEGK).

It belongs to the CcmE/CycJ family.

It localises to the cell inner membrane. Functionally, heme chaperone required for the biogenesis of c-type cytochromes. Transiently binds heme delivered by CcmC and transfers the heme to apo-cytochromes in a process facilitated by CcmF and CcmH. This chain is Cytochrome c-type biogenesis protein CcmE, found in Pseudomonas aeruginosa (strain ATCC 15692 / DSM 22644 / CIP 104116 / JCM 14847 / LMG 12228 / 1C / PRS 101 / PAO1).